The primary structure comprises 101 residues: Integration host factor subunit beta (101 aa).

This sequence belongs to the bacterial histone-like protein family. In terms of assembly, heterodimer of an alpha and a beta chain.

Functionally, this protein is one of the two subunits of integration host factor, a specific DNA-binding protein that functions in genetic recombination as well as in transcriptional and translational control. The sequence is that of Integration host factor subunit beta from Nitrobacter hamburgensis (strain DSM 10229 / NCIMB 13809 / X14).